We begin with the raw amino-acid sequence, 445 residues long: Arginine biosynthesis bifunctional protein ArgJ, mitochondrial (445 aa).

Residues T189, K215, T226, E312, N440, and S445 each contribute to the substrate site. The active-site Nucleophile is the T226.

It belongs to the ArgJ family. In terms of assembly, heterodimer of an alpha and a beta chain. Post-translationally, the alpha and beta chains are autoproteolytically processed from a single precursor protein within the mitochondrion.

It localises to the mitochondrion matrix. The enzyme catalyses N(2)-acetyl-L-ornithine + L-glutamate = N-acetyl-L-glutamate + L-ornithine. It carries out the reaction L-glutamate + acetyl-CoA = N-acetyl-L-glutamate + CoA + H(+). The protein operates within amino-acid biosynthesis; L-arginine biosynthesis; L-ornithine and N-acetyl-L-glutamate from L-glutamate and N(2)-acetyl-L-ornithine (cyclic): step 1/1. It functions in the pathway amino-acid biosynthesis; L-arginine biosynthesis; N(2)-acetyl-L-ornithine from L-glutamate: step 1/4. Catalyzes two activities which are involved in the cyclic version of arginine biosynthesis: the synthesis of acetylglutamate from glutamate and acetyl-CoA, and of ornithine by transacetylation between acetylornithine and glutamate. This is Arginine biosynthesis bifunctional protein ArgJ, mitochondrial from Schizosaccharomyces pombe (strain 972 / ATCC 24843) (Fission yeast).